We begin with the raw amino-acid sequence, 570 residues long: nebramycin 5' synthase (570 aa).

The kae1-like stretch occupies residues 1-354 (MRVLGLNGWP…AAAAVAVELG (354 aa)). D12 lines the tobramycin pocket. Catalysis depends on H14, which acts as the Proton acceptor. K39 serves as a coordination point for ATP. Fe cation-binding residues include H114, H118, and D137. Positions 139, 168, and 172 each coordinate carbamoyl adenylate. E172 and D228 together coordinate tobramycin. G310 and N314 together coordinate carbamoyl adenylate. Residue D338 participates in Fe cation binding. The segment at 367 to 570 (GPEFSPDQVR…PYLVTKDLRH (204 aa)) is yrdC-like. ATP is bound by residues R418 and R449. 418-419 (RA) lines the carbamoyl phosphate pocket. Residues R498 and 528–530 (NTS) contribute to the carbamoyl phosphate site.

The protein belongs to the NodU/CmcH family. Fe(2+) serves as cofactor.

It carries out the reaction tobramycin + carbamoyl phosphate + ATP + H2O = nebramycin 5' + AMP + phosphate + diphosphate + H(+). The enzyme catalyses kanamycin A + carbamoyl phosphate + ATP + H2O = 6''-O-carbamoylkanamycin A + AMP + phosphate + diphosphate + H(+). The catalysed reaction is carbamoyl phosphate + ATP + H2O = carbamoyl adenylate + phosphate + diphosphate. It catalyses the reaction tobramycin + carbamoyl adenylate = nebramycin 5' + AMP + H(+). It carries out the reaction carbamoyl adenylate + kanamycin A = 6''-O-carbamoylkanamycin A + AMP + H(+). It participates in antibiotic biosynthesis; kanamycin biosynthesis. It functions in the pathway antibiotic biosynthesis; tobramycin biosynthesis. ADP inhibits the formation of nebramycin 5'. In terms of biological role, tobZ is involved in the biosynthesis of the 2-deoxystreptamine-containing aminoglycoside antibiotics such as nebramycin 5 and 6-O-carbamoylkanamycin. Catalyzes the hydrolysis of carbamoyl phosphate and its subsequent adenylation by ATP to yield O-carbamoyladenylate. Then it catalyzes the transfer of the carbamoyl moiety from O-carbamoyladenylate to the tobramycin 6-hydroxy group to yield nebramycin 5'. It catalyzes the same reaction with kanamycin A. These reactions are considerably slower in the presence of deoxy-ATP. The polypeptide is nebramycin 5' synthase (tobZ) (Streptoalloteichus tenebrarius (strain ATCC 17920 / DSM 40477 / JCM 4838 / CBS 697.72 / NBRC 16177 / NCIMB 11028 / NRRL B-12390 / A12253. 1 / ISP 5477) (Streptomyces tenebrarius)).